The chain runs to 287 residues: Large ribosomal subunit protein uL2 (287 aa).

2 disordered regions span residues 1 to 30 (MGIRNYRPYTPGTRQKSVSDFSEITHDQPE) and 211 to 287 (NRWK…GRQS). Residues 12–22 (GTRQKSVSDFS) are compositionally biased toward polar residues. 2 stretches are compositionally biased toward basic residues: residues 211–220 (NRWKGRRPKV) and 258–287 (KTRKKKKLSNALIVRRRRKSSKRGRGGRQS).

This sequence belongs to the universal ribosomal protein uL2 family. In terms of assembly, part of the 50S ribosomal subunit. Forms a bridge to the 30S subunit in the 70S ribosome.

One of the primary rRNA binding proteins. Required for association of the 30S and 50S subunits to form the 70S ribosome, for tRNA binding and peptide bond formation. It has been suggested to have peptidyltransferase activity; this is somewhat controversial. Makes several contacts with the 16S rRNA in the 70S ribosome. The chain is Large ribosomal subunit protein uL2 from Cyanothece sp. (strain PCC 7425 / ATCC 29141).